Reading from the N-terminus, the 360-residue chain is GTPase Obg (360 aa).

One can recognise an Obg domain in the interval 1 to 156 (MFVDSVEIII…KCVRLELKLI (156 aa)). Residues 157-360 (ADIGLVGFPN…LKFVLLKALP (204 aa)) enclose the OBG-type G domain. Residues 163-170 (GFPNAGKS), 188-192 (FTTLV), 210-213 (DIPG), 279-282 (NKCD), and 341-343 (SAV) each bind GTP. Mg(2+)-binding residues include Ser170 and Thr190.

The protein belongs to the TRAFAC class OBG-HflX-like GTPase superfamily. OBG GTPase family. As to quaternary structure, monomer. Requires Mg(2+) as cofactor.

The protein resides in the cytoplasm. Its function is as follows. An essential GTPase which binds GTP, GDP and possibly (p)ppGpp with moderate affinity, with high nucleotide exchange rates and a fairly low GTP hydrolysis rate. Plays a role in control of the cell cycle, stress response, ribosome biogenesis and in those bacteria that undergo differentiation, in morphogenesis control. The sequence is that of GTPase Obg from Helicobacter pylori (strain G27).